The sequence spans 196 residues: Baseplate wedge protein gp53 (196 aa).

As to quaternary structure, part of the baseplate macromolecular complex which consists of gp5, gp5.4, gp27 (central spike complex); gp6, gp25, gp53 (inner baseplate); gp7, gp8 (intermediate baseplate); gp9, gp10, gp11, gp12 (peripheral); gp48 and gp54 (proximal region of the tail tube). Interacts with gp25 and with the (gp6)2-gp7 heterotrimeric molecule.

Its subcellular location is the virion. Its function is as follows. Baseplate protein that is located next to the tail tube (inner baseplate). Involved in the tail assembly. Involved in the tail assembly. The polypeptide is Baseplate wedge protein gp53 (53) (Enterobacteria phage T4 (Bacteriophage T4)).